The following is a 357-amino-acid chain: S-adenosyl-L-methionine:benzoic acid/salicylic acid carboxyl methyltransferase 2 (357 aa).

Tyr18 contributes to the S-adenosyl-L-homocysteine binding site. Gln25 contacts benzoate. Positions 59, 64, 96, 97, 135, and 136 each coordinate S-adenosyl-L-homocysteine. A benzoate-binding site is contributed by Trp157. Asn168, Asp254, Phe256, and Asn257 together coordinate Mg(2+). Residue Gln260 coordinates benzoate.

The protein belongs to the methyltransferase superfamily. Type-7 methyltransferase family. In terms of tissue distribution, predominantly expressed in petal limbs and tubes of corollas.

The catalysed reaction is benzoate + S-adenosyl-L-methionine = methyl benzoate + S-adenosyl-L-homocysteine. It carries out the reaction salicylate + S-adenosyl-L-methionine = methyl salicylate + S-adenosyl-L-homocysteine. It functions in the pathway aromatic compound metabolism. Its function is as follows. Converts benzoic acid into the volatile ester methyl benzoates. This scent, mostly produced in a rhythmical, diurnal manner, attracts the pollinators. The protein is S-adenosyl-L-methionine:benzoic acid/salicylic acid carboxyl methyltransferase 2 of Petunia hybrida (Petunia).